The following is a 307-amino-acid chain: Sex-lethal homolog (307 aa).

2 consecutive RRM domains span residues 85-163 (TNLI…YARP) and 171-251 (TNLY…LAEE). Over residues 285 to 299 (HRGRHNKNRNQKPHP) the composition is skewed to basic residues. The disordered stretch occupies residues 285 to 307 (HRGRHNKNRNQKPHPYHNPQKFI).

Its subcellular location is the nucleus. Unknown; apparently not involved in somatic sex determination. The chain is Sex-lethal homolog (SXL) from Chrysomya rufifacies (Hairy maggot blowfly).